The primary structure comprises 593 residues: Histone-arginine methyltransferase CARMER (593 aa).

An SAM-dependent MTase PRMT-type domain is found at 122–429 (ASQYFQFYGY…QRQSYDVEMD (308 aa)). Residues Q135, R144, G168, E190, E219, and T247 each contribute to the S-adenosyl-L-methionine site. R482 is subject to Asymmetric dimethylarginine; by autocatalysis. Residues 521-540 (LISSTGRQQSQQQTTPAQPL) are disordered. The span at 523 to 535 (SSTGRQQSQQQTT) shows a compositional bias: low complexity.

This sequence belongs to the class I-like SAM-binding methyltransferase superfamily. Protein arginine N-methyltransferase family. In terms of assembly, homodimer. In terms of processing, the dimethylated protein is the major form.

Its subcellular location is the cytoplasm. The protein localises to the nucleus. It catalyses the reaction L-arginyl-[protein] + 2 S-adenosyl-L-methionine = N(omega),N(omega)-dimethyl-L-arginyl-[protein] + 2 S-adenosyl-L-homocysteine + 2 H(+). Methylates (mono- and asymmetric dimethylation) the guanidino nitrogens of arginyl residues in proteins. May methylate histone H3 at 'Arg-17' and activate transcription via chromatin remodeling. The chain is Histone-arginine methyltransferase CARMER from Aedes aegypti (Yellowfever mosquito).